We begin with the raw amino-acid sequence, 731 residues long: 1,4-alpha-glucan branching enzyme GlgB (731 aa).

Cysteine 193 and cysteine 617 are oxidised to a cystine. Aspartate 411 (nucleophile) is an active-site residue. Glutamate 464 acts as the Proton donor in catalysis.

This sequence belongs to the glycosyl hydrolase 13 family. GlgB subfamily. In terms of assembly, monomer.

It catalyses the reaction Transfers a segment of a (1-&gt;4)-alpha-D-glucan chain to a primary hydroxy group in a similar glucan chain.. It functions in the pathway glycan biosynthesis; glycogen biosynthesis. Its pathway is capsule biogenesis; capsule polysaccharide biosynthesis. Its function is as follows. Essential enzyme that catalyzes the formation of the alpha-1,6-glucosidic linkages in glucan chains by scission of a 1,4-alpha-linked oligosaccharide from growing alpha-1,4-glucan chains and the subsequent attachment of the oligosaccharide to the alpha-1,6 position. Is involved in the biosynthesis of both glycogen and capsular alpha-D-glucan. The protein is 1,4-alpha-glucan branching enzyme GlgB (glgB) of Mycobacterium tuberculosis (strain CDC 1551 / Oshkosh).